The sequence spans 484 residues: Mitochondrial metal transporter 2 (484 aa).

Residues 1–56 (MLRISIDSIKQFGSFVPGYNNTSYHAAGRAIRTSSLYSTMISANPRRCLHSSKLLN) constitute a mitochondrion transit peptide. Positions 73-82 (SSQNGSNSRQ) are enriched in polar residues. The interval 73-114 (SSQNGSNSRQNESEGKKEGKASSVKSLLQHTHSHSHTHMHDN) is disordered. Residues 83-92 (NESEGKKEGK) are compositionally biased toward basic and acidic residues. 5 consecutive transmembrane segments (helical) span residues 132–152 (ITWI…VGGI), 158–178 (ALLA…LTLF), 209–229 (ILAM…VGPV), 256–276 (ATNV…EWVF), and 316–336 (YFFN…GLII). The tract at residues 453–484 (DSKGDLEHSHDTKSTNHTHTHSDSADTHTHKH) is disordered.

Belongs to the cation diffusion facilitator (CDF) transporter (TC 2.A.4) family. SLC30A subfamily.

The protein resides in the mitochondrion membrane. Functionally, mitochondrial metal transporter involved in mitochondrial iron accumulation. This chain is Mitochondrial metal transporter 2 (MMT2), found in Saccharomyces cerevisiae (strain ATCC 204508 / S288c) (Baker's yeast).